A 382-amino-acid polypeptide reads, in one-letter code: Mannitol-1-phosphate 5-dehydrogenase (382 aa).

4 to 15 (AVHFGAGNIGRG) is an NAD(+) binding site.

Belongs to the mannitol dehydrogenase family.

The enzyme catalyses D-mannitol 1-phosphate + NAD(+) = beta-D-fructose 6-phosphate + NADH + H(+). This chain is Mannitol-1-phosphate 5-dehydrogenase, found in Vibrio campbellii (strain ATCC BAA-1116).